The chain runs to 125 residues: Ribosome-binding factor A (125 aa).

The protein belongs to the RbfA family. As to quaternary structure, monomer. Binds 30S ribosomal subunits, but not 50S ribosomal subunits or 70S ribosomes.

The protein localises to the cytoplasm. Functionally, one of several proteins that assist in the late maturation steps of the functional core of the 30S ribosomal subunit. Associates with free 30S ribosomal subunits (but not with 30S subunits that are part of 70S ribosomes or polysomes). Required for efficient processing of 16S rRNA. May interact with the 5'-terminal helix region of 16S rRNA. In Paracidovorax citrulli (strain AAC00-1) (Acidovorax citrulli), this protein is Ribosome-binding factor A.